The chain runs to 222 residues: Cyclin-dependent kinase inhibitor 3 (222 aa).

The disordered stretch occupies residues lysine 68–valine 101. A compositionally biased stretch (basic and acidic residues) spans glycine 85–valine 95.

It belongs to the CDI family. ICK/KRP subfamily. As to quaternary structure, specifically interacts with CDKA-1, but not with CDKB1-1.

The protein localises to the nucleus. Its subcellular location is the nucleoplasm. Binds and inhibits CYCD2-1/CDKA-1 complex kinase activity. May target specifically CDKA-1. This is Cyclin-dependent kinase inhibitor 3 (KRP3) from Arabidopsis thaliana (Mouse-ear cress).